The primary structure comprises 531 residues: Basal body-orientation factor 1 (531 aa).

A compositionally biased stretch (basic residues) spans 1 to 19; the sequence is MPKLKVKAGKGKKGKRKKA. Residues 1-32 are disordered; the sequence is MPKLKVKAGKGKKGKRKKAGKNEHRLDKESEV. The span at 20-32 shows a compositional bias: basic and acidic residues; sequence GKNEHRLDKESEV. Coiled coils occupy residues 26–213 and 274–365; these read LDKE…AEKA and VQEK…VESF. The segment at 465–505 is disordered; sequence QSRKSPGLKPSPPADVSSIKEKEINTSNLEEKPEESSSTFI. Residues 482-499 are compositionally biased toward basic and acidic residues; that stretch reads SIKEKEINTSNLEEKPEE.

It belongs to the BBOF1 family. As to expression, multiciliated cells.

The protein localises to the cytoplasm. It is found in the cytoskeleton. The protein resides in the cilium basal body. Its function is as follows. Basal body protein required in multiciliate cells to align and maintain cilia orientation in response to flow. May act by mediating a maturation step that stabilizes and aligns cilia orientation. Not required to respond to planar cell polarity (PCP) or flow-based orientation cues. The polypeptide is Basal body-orientation factor 1 (ccdc176) (Xenopus laevis (African clawed frog)).